Reading from the N-terminus, the 541-residue chain is Arginine--tRNA ligase (541 aa).

Residues 119–129 (ANPTGPLHIGH) carry the 'HIGH' region motif.

This sequence belongs to the class-I aminoacyl-tRNA synthetase family. In terms of assembly, monomer.

The protein localises to the cytoplasm. The enzyme catalyses tRNA(Arg) + L-arginine + ATP = L-arginyl-tRNA(Arg) + AMP + diphosphate. This is Arginine--tRNA ligase from Helicobacter pylori (strain G27).